Consider the following 168-residue polypeptide: MGWRFPSPSPRQASPVAPLLAAPTAVRSCSHCSGQREAISSHPLQLETPELGVCLPWHWEGWRQVRKITPSLPQPPGSQVPLEVTFHVRATLPHFRGGETKARRAREEGKLPSLGNAPAPRRRSVAWPAAEGSCAAPESSPPASEASLPAPESSLLVAGSGDLCADSF.

Residues 1–29 (MGWRFPSPSPRQASPVAPLLAAPTAVRSC) constitute a mitochondrion transit peptide. Basic and acidic residues predominate over residues 98 to 110 (GETKARRAREEGK). Residues 98-152 (GETKARRAREEGKLPSLGNAPAPRRRSVAWPAAEGSCAAPESSPPASEASLPAPE) form a disordered region. Positions 128-152 (PAAEGSCAAPESSPPASEASLPAPE) are enriched in low complexity.

It localises to the mitochondrion. This is an uncharacterized protein from Homo sapiens (Human).